A 1058-amino-acid polypeptide reads, in one-letter code: Ubiquitin-like modifier-activating enzyme 1 (1058 aa).

The disordered stretch occupies residues 1–46 (MSSSPLSKKRRVSGPDPKPGSNCSSAQSVLSEVSSVPTNGMAKNGS). Ser2 is modified (N-acetylserine). Phosphoserine is present on residues Ser4, Ser13, Ser21, Ser24, and Ser46. Residues 24–36 (SSAQSVLSEVSSV) are compositionally biased toward low complexity. Tyr55 bears the Phosphotyrosine mark. Repeat copies occupy residues 63 to 199 (GHEA…GQLF) and 459 to 611 (GSDL…QVVI). Residues 63–611 (GHEAMKMLQT…GTKGNVQVVI (549 aa)) form a 2 approximate repeats region. ATP contacts are provided by residues Ala478, Asp504, Arg515, Lys528, and 576-577 (DN). Position 528 is an N6-succinyllysine (Lys528). The active-site Glycyl thioester intermediate is the Cys632. Lys671 is modified (N6-acetyllysine). The residue at position 800 (Thr800) is a Phosphothreonine. Phosphoserine occurs at positions 810, 816, 820, and 835. Lys980 carries the N6-acetyllysine modification.

The protein belongs to the ubiquitin-activating E1 family. Monomer. Interacts with GAN (via BTB domain). ISGylated.

It localises to the cytoplasm. It is found in the mitochondrion. The protein localises to the nucleus. The catalysed reaction is ATP + ubiquitin + [E1 ubiquitin-activating enzyme]-L-cysteine = AMP + diphosphate + S-ubiquitinyl-[E1 ubiquitin-activating enzyme]-L-cysteine.. The protein operates within protein modification; protein ubiquitination. Its function is as follows. Catalyzes the first step in ubiquitin conjugation to mark cellular proteins for degradation through the ubiquitin-proteasome system. Activates ubiquitin by first adenylating its C-terminal glycine residue with ATP, and thereafter linking this residue to the side chain of a cysteine residue in E1, yielding a ubiquitin-E1 thioester and free AMP. Essential for the formation of radiation-induced foci, timely DNA repair and for response to replication stress. Promotes the recruitment of TP53BP1 and BRCA1 at DNA damage sites. The sequence is that of Ubiquitin-like modifier-activating enzyme 1 from Rattus norvegicus (Rat).